The primary structure comprises 712 residues: Sesterterpene synthase btcA (712 aa).

The terpene cyclase stretch occupies residues 1–332 (MTTIWEHCVD…CANCPRHHAW (332 aa)). D96 is a binding site for Mg(2+). Substrate is bound by residues D96, N234, 238–242 (SWDRE), and 328–329 (RH). The DDXXD 1 motif lies at 96–100 (DDLCD). The NSE/DTE motif lies at 234–242 (NDYWSWDRE). The tract at residues 333–706 (RDEESSPSER…VMRIVLSRLS (374 aa)) is prenyltransferase. Positions 334 to 373 (DEESSPSERSFSPSNEGIEDPRLSPGASTTSSMSQKSSPA) are disordered. 2 stretches are compositionally biased toward low complexity: residues 340-349 (SERSFSPSNE) and 361-373 (STTS…SSPA). Positions 414, 417, and 446 each coordinate isopentenyl diphosphate. Residues D453 and D457 each coordinate Mg(2+). Positions 453–457 (DDIED) match the DDXXD 2 motif. R462 is a dimethylallyl diphosphate binding site. Isopentenyl diphosphate is bound at residue R463. Residues K540, T541, Q580, N587, K597, and K607 each coordinate dimethylallyl diphosphate.

It in the N-terminal section; belongs to the terpene synthase family. This sequence in the C-terminal section; belongs to the FPP/GGPP synthase family. As to quaternary structure, hexamer. It depends on Mg(2+) as a cofactor.

The enzyme catalyses isopentenyl diphosphate + (2E,6E)-farnesyl diphosphate = (2E,6E,10E)-geranylgeranyl diphosphate + diphosphate. It catalyses the reaction isopentenyl diphosphate + (2E,6E,10E)-geranylgeranyl diphosphate = (2E,6E,10E,14E)-geranylfarnesyl diphosphate + diphosphate. It participates in secondary metabolite biosynthesis; terpenoid biosynthesis. Bifunctional terpene synthase; part of the gene cluster that mediates the biosynthesis of betaestacins. The bifunctional terpene synthase btcA converts isopentenyl diphosphate (IPP) and dimethylallyl diphosphate (DMAPP) into the sesterterpene betaestacin I. The C-terminal prenyltransferase (PT) domain of btcA catalyzes formation of GFPP, whereas the N-terminal terpene cyclase (TC) domain catalyzes the cyclization of GFPP into betaestacin I. The cytochrome P450 monooxygenase btcB oxidizes the C25 methyl group of betaestacin I to yield the carboxylic acid betaestacin IV via the alcohol betaestacin III. The cytochrome P450 monooxygenase btcC further catalyzes the multistep oxidation of betaestacin IV to produce several compounds, including betaestacins Va, Vb, Vc and VI. The chain is Sesterterpene synthase btcA from Colletotrichum orbiculare (strain 104-T / ATCC 96160 / CBS 514.97 / LARS 414 / MAFF 240422) (Cucumber anthracnose fungus).